A 432-amino-acid polypeptide reads, in one-letter code: Serine/threonine-protein phosphatase 2A activator 1 (432 aa).

The protein belongs to the PTPA-type PPIase family.

The protein resides in the cytoplasm. Its subcellular location is the nucleus. The enzyme catalyses [protein]-peptidylproline (omega=180) = [protein]-peptidylproline (omega=0). PPIases accelerate the folding of proteins. It catalyzes the cis-trans isomerization of proline imidic peptide bonds in oligopeptides. Acts as a regulatory subunit for PP2A-like phosphatases modulating their activity or substrate specificity, probably by inducing a conformational change in the catalytic subunit, a direct target of the PPIase. Can reactivate inactive phosphatase PP2A-phosphatase methylesterase complexes (PP2Ai) in presence of ATP and Mg(2+) by dissociating the inactive form from the complex. This is Serine/threonine-protein phosphatase 2A activator 1 (rrd1) from Emericella nidulans (strain FGSC A4 / ATCC 38163 / CBS 112.46 / NRRL 194 / M139) (Aspergillus nidulans).